The chain runs to 394 residues: MAKAKFERTKPHVNIGTIGHVDHGKTSLTAAITIVLAKTGGAQATAYDQIDAAPEEKERGITISTAHVEYETKNRHYAHVDCPGHADYVKNMITGAAQMDGAILVVSAADGPMPQTREHILLAKQVGVPAMVVFLNKVDMVDDSDLLELVEMEVRELLSKYGFPGDEIPIIKGSALQALEGKPEGEKAINELMDAVDSYIPQPVRATDKPFLMPIEDVFSISGRSTVVTGRVESGIIKVGEEIEIVGLKDTQKTTCTGVEMFRKLLDEGQAGDNVGILLRGTKREEVERGQVLAKPGSIKPHDKFEAEVYVLSKEEGGRHTPFTNDYRPQFYFRTTDVTGTIKLPADKQMVMPGDNATFTVELIKPIAMQEGLKFSIREGGRTVGAGVVTKINN.

One can recognise a tr-type G domain in the interval 10–204; sequence KPHVNIGTIG…AVDSYIPQPV (195 aa). Positions 19–26 are G1; it reads GHVDHGKT. 19–26 is a binding site for GTP; the sequence is GHVDHGKT. T26 lines the Mg(2+) pocket. The tract at residues 60 to 64 is G2; that stretch reads GITIS. The tract at residues 81 to 84 is G3; it reads DCPG. GTP-binding positions include 81–85 and 136–139; these read DCPGH and NKVD. Residues 136-139 are G4; the sequence is NKVD. Positions 174 to 176 are G5; the sequence is SAL.

The protein belongs to the TRAFAC class translation factor GTPase superfamily. Classic translation factor GTPase family. EF-Tu/EF-1A subfamily. Monomer.

It localises to the cytoplasm. It carries out the reaction GTP + H2O = GDP + phosphate + H(+). In terms of biological role, GTP hydrolase that promotes the GTP-dependent binding of aminoacyl-tRNA to the A-site of ribosomes during protein biosynthesis. This Rickettsia parkeri protein is Elongation factor Tu.